The chain runs to 316 residues: MNVITPPFADGVDPKPVCIVADDIFETMTARRKIHFSIYVIFKKNVELAEPFKLLYYTEKKNVAHLDGSVAQDFGLPMWTKDDGQRAPDLSRQKNDYIKLDFFTNINNPEDGFSYCWTDCISTKNTTMVPRQLMPPSKRSMKLYLILPVEESNIMVLSEKAYGSLQLMKKHRKMGQPPQRVGCYINFNCQTSKVMFGCGHVYCEQCLNSWNDKPCSVCLKPVTSEPTQLKLRQGPCPFDLCSPNSSTMGIVLIPCGCHVMCQNLEDAYERNKHHLEPLIEKIKYCPFEPCRIRVRKLKKPFWHQQDKEHTLEMNSA.

An RING-type; degenerate zinc finger spans residues 183–218 (CYINFNCQTSKVMFGCGHVYCEQCLNSWNDKPCSVC).

In terms of assembly, interacts (via RING-type zinc finger domain) with rde-10.

In terms of biological role, in complex with rde-10, required in the endogenous and exogenous siRNA pathway for biogenesis and accumulation of secondary small interfering RNA (siRNA) intermediates, such as 22G-siRNAs derived from ergo-1 targets. The sequence is that of RNA interference defective protein 11 from Caenorhabditis elegans.